Reading from the N-terminus, the 210-residue chain is MIKLFVGLGNPGPEYEATRHNAGFWWIDALARDWKLNLVPERSYHGLAARTNIGGQSVWLLEPQTFMNLSGKSVGALARFFKIAPEEILVVHDELDVVPGQAKLKFGGSHAGHNGLRDIHAQLGTGDYWRLRLGIGHPGVKSEVINWVLKKPLKEQREAIEDAIVRTLHAAPALVAGEMEKATLIIHTSKPPRPKPPRREPGDGGTPATA.

Tyrosine 15 serves as a coordination point for tRNA. Histidine 20 acts as the Proton acceptor in catalysis. TRNA contacts are provided by phenylalanine 66, asparagine 68, and asparagine 114. The tract at residues 186–210 (IHTSKPPRPKPPRREPGDGGTPATA) is disordered.

This sequence belongs to the PTH family. Monomer.

The protein resides in the cytoplasm. The enzyme catalyses an N-acyl-L-alpha-aminoacyl-tRNA + H2O = an N-acyl-L-amino acid + a tRNA + H(+). Functionally, hydrolyzes ribosome-free peptidyl-tRNAs (with 1 or more amino acids incorporated), which drop off the ribosome during protein synthesis, or as a result of ribosome stalling. In terms of biological role, catalyzes the release of premature peptidyl moieties from peptidyl-tRNA molecules trapped in stalled 50S ribosomal subunits, and thus maintains levels of free tRNAs and 50S ribosomes. The sequence is that of Peptidyl-tRNA hydrolase from Variovorax paradoxus (strain S110).